Consider the following 504-residue polypeptide: Maturase K (504 aa).

It belongs to the intron maturase 2 family. MatK subfamily.

It localises to the plastid. Its subcellular location is the chloroplast. Functionally, usually encoded in the trnK tRNA gene intron. Probably assists in splicing its own and other chloroplast group II introns. The polypeptide is Maturase K (Hamamelis virginiana (Witch-hazel)).